A 197-amino-acid chain; its full sequence is Protein GrpE (197 aa).

A disordered region spans residues 1–39; that stretch reads MSSKEQKTPEGQAPEEIIMDQHEEIEAVEPEASAEQVDP.

Belongs to the GrpE family. In terms of assembly, homodimer.

The protein resides in the cytoplasm. Functionally, participates actively in the response to hyperosmotic and heat shock by preventing the aggregation of stress-denatured proteins, in association with DnaK and GrpE. It is the nucleotide exchange factor for DnaK and may function as a thermosensor. Unfolded proteins bind initially to DnaJ; upon interaction with the DnaJ-bound protein, DnaK hydrolyzes its bound ATP, resulting in the formation of a stable complex. GrpE releases ADP from DnaK; ATP binding to DnaK triggers the release of the substrate protein, thus completing the reaction cycle. Several rounds of ATP-dependent interactions between DnaJ, DnaK and GrpE are required for fully efficient folding. This is Protein GrpE from Escherichia coli O45:K1 (strain S88 / ExPEC).